Reading from the N-terminus, the 89-residue chain is UPF0237 protein LMOf2365_0562 (89 aa).

Residues 4–78 (VLTVIGKDNV…EDLQVKIHIQ (75 aa)) form the ACT domain.

This sequence belongs to the UPF0237 family.

This Listeria monocytogenes serotype 4b (strain F2365) protein is UPF0237 protein LMOf2365_0562.